Here is a 479-residue protein sequence, read N- to C-terminus: Beta-amyrin 28-monooxygenase (479 aa).

Residues 5–25 (FYLSLLLLFVTFISLSLFFIF) form a helical membrane-spanning segment. Cysteine 426 lines the heme pocket.

Belongs to the cytochrome P450 family. It depends on heme as a cofactor. As to expression, expressed in roots, nodules and flowers.

The protein resides in the membrane. It catalyses the reaction beta-amyrin + 3 reduced [NADPH--hemoprotein reductase] + 3 O2 = oleanolate + 3 oxidized [NADPH--hemoprotein reductase] + 4 H2O + 4 H(+). Functionally, catalyzes the carboxylation of beta-amyrin at the C-28 position to form oleanolic acid. Involved in an early step in the hemolytic saponin biosynthetic pathway. Catalyzes the carboxylation of alpha-amyrin and lupeol at the C-28 position to form ursolic acid and betulinic acid respectively. This chain is Beta-amyrin 28-monooxygenase, found in Medicago truncatula (Barrel medic).